The chain runs to 147 residues: Transcription antitermination protein NusB (147 aa).

It belongs to the NusB family.

In terms of biological role, involved in transcription antitermination. Required for transcription of ribosomal RNA (rRNA) genes. Binds specifically to the boxA antiterminator sequence of the ribosomal RNA (rrn) operons. The polypeptide is Transcription antitermination protein NusB (Teredinibacter turnerae (strain ATCC 39867 / T7901)).